A 1436-amino-acid polypeptide reads, in one-letter code: DNA polymerase III PolC-type (1436 aa).

An Exonuclease domain is found at 420 to 576; the sequence is YVVFDVETTG…YDTEATAYIF (157 aa).

The protein belongs to the DNA polymerase type-C family. PolC subfamily.

Its subcellular location is the cytoplasm. It catalyses the reaction DNA(n) + a 2'-deoxyribonucleoside 5'-triphosphate = DNA(n+1) + diphosphate. Functionally, required for replicative DNA synthesis. This DNA polymerase also exhibits 3' to 5' exonuclease activity. The sequence is that of DNA polymerase III PolC-type from Staphylococcus aureus (strain MW2).